The sequence spans 291 residues: Oligopeptide transport system permease protein OppC (291 aa).

6 consecutive transmembrane segments (helical) span residues 22–42 (VASL…PPLL), 85–105 (MLIG…VGAI), 116–136 (TLMW…IAIV), 142–162 (NSAN…MISS), 209–229 (ALNV…GFGI), and 247–267 (ATAF…ILVC). The 192-residue stretch at 81–272 (MQKSMLIGVC…LILVCANLTG (192 aa)) folds into the ABC transmembrane type-1 domain.

The protein belongs to the binding-protein-dependent transport system permease family. OppBC subfamily. As to quaternary structure, the complex is composed of an ATP-binding protein (OppD), two transmembrane proteins (OppB and OppC) and a solute-binding protein (OppA).

It is found in the cell inner membrane. Part of the ABC transporter complex OppABCD involved in the uptake of oligopeptides. Responsible for the translocation of the substrate across the membrane. This is Oligopeptide transport system permease protein OppC from Mycobacterium bovis (strain ATCC BAA-935 / AF2122/97).